The chain runs to 91 residues: Small ribosomal subunit protein bS20 (91 aa).

The segment at Met-1–Val-28 is disordered.

This sequence belongs to the bacterial ribosomal protein bS20 family.

Binds directly to 16S ribosomal RNA. The protein is Small ribosomal subunit protein bS20 of Anaeromyxobacter dehalogenans (strain 2CP-1 / ATCC BAA-258).